Consider the following 467-residue polypeptide: 6-phosphogluconate dehydrogenase, decarboxylating (467 aa).

Residues 9–14 (GLGVMG), 32–34 (NYT), 73–75 (VTA), and N101 each bind NADP(+). Substrate contacts are provided by residues N101 and 127–129 (SGG). Catalysis depends on K181, which acts as the Proton acceptor. Residue 184–185 (HN) coordinates substrate. The active-site Proton donor is the E188. The substrate site is built by Y189, K259, R286, and H451.

Belongs to the 6-phosphogluconate dehydrogenase family. Homodimer.

The catalysed reaction is 6-phospho-D-gluconate + NADP(+) = D-ribulose 5-phosphate + CO2 + NADPH. It functions in the pathway carbohydrate degradation; pentose phosphate pathway; D-ribulose 5-phosphate from D-glucose 6-phosphate (oxidative stage): step 3/3. Catalyzes the oxidative decarboxylation of 6-phosphogluconate to ribulose 5-phosphate and CO(2), with concomitant reduction of NADP to NADPH. The chain is 6-phosphogluconate dehydrogenase, decarboxylating (gntZ) from Bacillus licheniformis.